A 445-amino-acid polypeptide reads, in one-letter code: 8-amino-7-oxononanoate synthase (445 aa).

Residue Arg40 coordinates substrate. A pyridoxal 5'-phosphate-binding site is contributed by 131–132 (GY). Residue His156 coordinates substrate. Residues Ser202, His230, and Thr258 each coordinate pyridoxal 5'-phosphate. Lys261 is subject to N6-(pyridoxal phosphate)lysine. Thr377 contributes to the substrate binding site. The tract at residues 408-445 (ASEGQTRRDAEQPPRSLRSLPPEGAAASLGAARRETAA) is disordered.

It belongs to the class-II pyridoxal-phosphate-dependent aminotransferase family. BioF subfamily. As to quaternary structure, homodimer. Pyridoxal 5'-phosphate serves as cofactor.

The enzyme catalyses 6-carboxyhexanoyl-[ACP] + L-alanine + H(+) = (8S)-8-amino-7-oxononanoate + holo-[ACP] + CO2. It functions in the pathway cofactor biosynthesis; biotin biosynthesis. In terms of biological role, catalyzes the decarboxylative condensation of pimeloyl-[acyl-carrier protein] and L-alanine to produce 8-amino-7-oxononanoate (AON), [acyl-carrier protein], and carbon dioxide. In Burkholderia ambifaria (strain MC40-6), this protein is 8-amino-7-oxononanoate synthase.